Reading from the N-terminus, the 115-residue chain is NAD(P)H-quinone oxidoreductase subunit M (115 aa).

Belongs to the complex I NdhM subunit family. In terms of assembly, NDH-1 can be composed of about 15 different subunits; different subcomplexes with different compositions have been identified which probably have different functions.

It localises to the cellular thylakoid membrane. It catalyses the reaction a plastoquinone + NADH + (n+1) H(+)(in) = a plastoquinol + NAD(+) + n H(+)(out). It carries out the reaction a plastoquinone + NADPH + (n+1) H(+)(in) = a plastoquinol + NADP(+) + n H(+)(out). In terms of biological role, NDH-1 shuttles electrons from an unknown electron donor, via FMN and iron-sulfur (Fe-S) centers, to quinones in the respiratory and/or the photosynthetic chain. The immediate electron acceptor for the enzyme in this species is believed to be plastoquinone. Couples the redox reaction to proton translocation, and thus conserves the redox energy in a proton gradient. Cyanobacterial NDH-1 also plays a role in inorganic carbon-concentration. This Prochlorococcus marinus (strain MIT 9301) protein is NAD(P)H-quinone oxidoreductase subunit M.